We begin with the raw amino-acid sequence, 424 residues long: STAM-binding protein (424 aa).

Residues 1 to 127 (MSDHGDVSLP…YEQYKERKKK (127 aa)) form an interaction with CHMP3 region. Phosphoserine is present on residues Ser-2 and Ser-48. The interval 227–231 (PAKPP) is interaction with STAM. Ser-243 bears the Phosphoserine mark. Residues 257–388 (IVVPRNLCSE…LTDYGLQEIS (132 aa)) form the MPN domain. Positions 335, 337, 348, 350, 390, 396, and 398 each coordinate Zn(2+). Residues 335–348 (HTHPTQTAFLSSVD) carry the JAMM motif motif.

The protein belongs to the peptidase M67C family. As to quaternary structure, interacts with STAM. Interacts with SMAD6 and SMAD7. Interacts with CHMP3; the interaction appears to relieve the autoinhibition of CHMP3. Interacts with SMURF2 and RNF11; this interaction promotes ubiquitination. The cofactor is Zn(2+). In terms of processing, phosphorylated after BMP type I receptor activation. Ubiquitinated by SMURF2 in the presence of RNF11. In terms of tissue distribution, expressed in brain.

The protein localises to the nucleus. The protein resides in the membrane. Its subcellular location is the cytoplasm. It localises to the early endosome. Its activity is regulated as follows. Inhibited by N-ethylmaleimide. Functionally, zinc metalloprotease that specifically cleaves 'Lys-63'-linked polyubiquitin chains. Does not cleave 'Lys-48'-linked polyubiquitin chains. Plays a role in signal transduction for cell growth and MYC induction mediated by IL-2 and GM-CSF. Potentiates BMP (bone morphogenetic protein) signaling by antagonizing the inhibitory action of SMAD6 and SMAD7. Has a key role in regulation of cell surface receptor-mediated endocytosis and ubiquitin-dependent sorting of receptors to lysosomes. Endosomal localization of STAMBP is required for efficient EGFR degradation but not for its internalization. Involved in the negative regulation of PI3K-AKT-mTOR and RAS-MAP signaling pathways. The chain is STAM-binding protein (Stambp) from Mus musculus (Mouse).